The sequence spans 109 residues: Mitochondrial import inner membrane translocase subunit TIM12 (109 aa).

S2 carries the N-acetylserine modification. The Twin CX3C motif motif lies at C40–C66. Intrachain disulfides connect C40–C66 and C44–C62.

It belongs to the small Tim family. Component of the TIM22 complex, whose core is composed of TIM18, TIM22 and TIM54, associated with the peripheral proteins MRS5/TIM12 and the 70 kDa heterohexamer composed of TIM9 and TIM10 (or TIM8 and TIM13). Interacts directly with both the TIM22 protein and the TIM9-TIM10 heterohexamer. Interacts with multi-pass transmembrane proteins in transit.

Its subcellular location is the mitochondrion inner membrane. It localises to the mitochondrion intermembrane space. Functionally, essential component of the TIM22 complex, a complex that mediates the import and insertion of multi-pass transmembrane proteins into the mitochondrial inner membrane. The TIM22 complex forms a twin-pore translocase that uses the membrane potential as external driving force. In the TIM22 complex, it acts as a docking point for the soluble TIM9-TIM10 heterohexamer that guides the target proteins in transit through the aqueous mitochondrial intermembrane space. This chain is Mitochondrial import inner membrane translocase subunit TIM12 (TIM12), found in Saccharomyces cerevisiae (strain ATCC 204508 / S288c) (Baker's yeast).